The primary structure comprises 258 residues: MAAPRAVLHLGAREWNGRARRIHGMSELVTPDSSREKKRTLLQFLSDHFQDIQTLREYLLQKQISKVNRENRSFTNIQEKYGPYVAGAVFILKQGGAVKFQDKEEWIRPNNRSHFLAEIQKFQNVPVEAVDASGCAINYQGLSNLLPLKELRSLSLQRCPNLDDWCLSRLYLLAGSLQELSLAGCPRISERGLACLHHLQNLRRLDISDLPAVSHPGLTQILVEEMLPHCEVLGADWAQNLKLEPDKQPPDTSTPLSS.

This sequence belongs to the ATP synthase subunit s family. In terms of assembly, interacts with incompletely assembled mitochondrial NADH:ubiquinone oxidoreductase complex (complex I).

The protein localises to the mitochondrion. In terms of biological role, required for the assembly of the mitochondrial NADH:ubiquinone oxidoreductase complex (complex I). Involved in the assembly of the distal region of complex I. The sequence is that of Distal membrane-arm assembly complex protein 2 (Dmac2) from Mus musculus (Mouse).